The primary structure comprises 544 residues: Dihydrolipoyllysine-residue acetyltransferase component of pyruvate dehydrogenase complex (544 aa).

Lipoyl-binding domains are found at residues 1–76 (MYEF…VTID) and 113–188 (IYDF…VLIG). 2 positions are modified to N6-lipoyllysine: Lys-42 and Lys-154. The Peripheral subunit-binding (PSBD) domain maps to 242–279 (LASPVARKLASDLGVDIATIKGSGEQGRVMKDDVQNSK). His-516 is a catalytic residue.

The protein belongs to the 2-oxoacid dehydrogenase family. As to quaternary structure, forms a 24-polypeptide structural core with octahedral symmetry. The cofactor is (R)-lipoate.

It catalyses the reaction N(6)-[(R)-dihydrolipoyl]-L-lysyl-[protein] + acetyl-CoA = N(6)-[(R)-S(8)-acetyldihydrolipoyl]-L-lysyl-[protein] + CoA. Its function is as follows. The pyruvate dehydrogenase complex catalyzes the overall conversion of pyruvate to acetyl-CoA and CO(2). It contains multiple copies of three enzymatic components: pyruvate dehydrogenase (E1), dihydrolipoamide acetyltransferase (E2) and lipoamide dehydrogenase (E3). The chain is Dihydrolipoyllysine-residue acetyltransferase component of pyruvate dehydrogenase complex (pdhC) from Acholeplasma laidlawii.